The chain runs to 334 residues: Transcription initiation factor IIB (334 aa).

The TFIIB-type zinc-finger motif lies at 34 to 65 (EELVCPMCDSKNIIKDYEKAEIVCEDCGCVLQ). Zn(2+) contacts are provided by C38, C41, C57, and C60. 2 repeat units span residues 151–234 (SELD…SREL) and 245–326 (DYVP…ELTE).

Belongs to the TFIIB family.

In terms of biological role, stabilizes TBP binding to an archaeal box-A promoter. Also responsible for recruiting RNA polymerase II to the pre-initiation complex (DNA-TBP-TFIIB). This Methanococcus aeolicus (strain ATCC BAA-1280 / DSM 17508 / OCM 812 / Nankai-3) protein is Transcription initiation factor IIB.